The chain runs to 328 residues: Sin3 histone deacetylase corepressor complex component SDS3 (328 aa).

A disordered region spans residues 1–64 (MSAAALLAPA…TDLAKHDEED (64 aa)). Serine 2 carries the post-translational modification N-acetylserine. The mediates interaction with USP17L2 stretch occupies residues 2-170 (SAAALLAPAP…IENEKLTMEL (169 aa)). Pro residues predominate over residues 10-21 (APAPAGAPPAPE). Composition is skewed to acidic residues over residues 23 to 37 (YPEEDEELESAEDDE) and 45 to 54 (SDEDTEDASE). Phosphoserine is present on residues serine 32 and serine 45. Phosphothreonine is present on threonine 49. Residue serine 53 is modified to Phosphoserine. The stretch at 64–171 (DFVEMKEQMY…ENEKLTMELT (108 aa)) forms a coiled coil. Residues lysine 69, lysine 178, and lysine 201 each participate in a glycyl lysine isopeptide (Lys-Gly) (interchain with G-Cter in SUMO2) cross-link. Residues 226–252 (LKSPKRPASPSSPEHLPTTPAESPAQR) form a disordered region. 3 positions are modified to phosphoserine: serine 228, serine 234, and serine 237. A Phosphothreonine modification is found at threonine 244.

Belongs to the SDS3 family. Homodimer. Component of the SIN3 histone deacetylase (HDAC) corepressor complex. Interacts with SIN3A. Interaction with SIN3B enhances the interaction between SIN3B and HDAC1 to form a complex. Interacts with HCFC1. Component of a mSin3A corepressor complex that contains SIN3A, SAP130, SUDS3/SAP45, ARID4B/SAP180, HDAC1 and HDAC2. Interacts with USP17L2; the interaction is direct. Interacts with FOXK2. Polyubiquitinated. 'Lys-63'-polyubiquitinated SUDS3 positively regulates histone deacetylation. Regulated through deubiquitination by USP17L2/USP17 that cleaves 'Lys-63'-linked ubiquitin chains.

Its subcellular location is the nucleus. In terms of biological role, regulatory protein which represses transcription and augments histone deacetylase activity of HDAC1. May have a potential role in tumor suppressor pathways through regulation of apoptosis. May function in the assembly and/or enzymatic activity of the mSin3A corepressor complex or in mediating interactions between the complex and other regulatory complexes. This is Sin3 histone deacetylase corepressor complex component SDS3 (SUDS3) from Bos taurus (Bovine).